Consider the following 351-residue polypeptide: Rab9 effector protein with kelch motifs (351 aa).

Kelch repeat units follow at residues 54-102, 105-156, 162-210, 214-263, 264-313, and 328-351; these read KIVI…PESE, SLWV…TNSA, LFVF…VITA, DIYI…TFNK, NIFI…LLPW, and LCFV…TVLT.

In terms of biological role, rab9 effector required for endosome to trans-Golgi network (TGN) transport. In Danio rerio (Zebrafish), this protein is Rab9 effector protein with kelch motifs (rabepk).